A 363-amino-acid polypeptide reads, in one-letter code: Ataxin-3 (363 aa).

The region spanning 1–180 (MESIFHERQE…DCEADQLLQM (180 aa)) is the Josephin domain. Catalysis depends on C14, which acts as the Nucleophile. H119 (proton acceptor) is an active-site residue. N134 is an active-site residue. The span at 192 to 209 (IGEETAQSRDQRLPRSDV) shows a compositional bias: basic and acidic residues. The disordered stretch occupies residues 192–212 (IGEETAQSRDQRLPRSDVDQA). UIM domains are found at residues 227–246 (EDEENFQRALALSRQEIDME), 247–266 (DEEADLRRAIQLSMQGSRQS), and 337–356 (SEEDMLQAAMNMSLESARNH). Residues 260–290 (MQGSRQSEFSNSLPQNASQPPHTSQTDSLSS) are compositionally biased toward polar residues. Residues 260–363 (MQGSRQSEFS…RNHLSTEEKK (104 aa)) form a disordered region. Over residues 353–363 (ARNHLSTEEKK) the composition is skewed to basic and acidic residues.

Widely expressed.

The protein resides in the nucleus matrix. The protein localises to the nucleus. It localises to the lysosome membrane. It catalyses the reaction Thiol-dependent hydrolysis of ester, thioester, amide, peptide and isopeptide bonds formed by the C-terminal Gly of ubiquitin (a 76-residue protein attached to proteins as an intracellular targeting signal).. Deubiquitinating enzyme involved in protein homeostasis maintenance, transcription, cytoskeleton regulation, myogenesis and degradation of misfolded chaperone substrates. Binds long polyubiquitin chains and trims them, while it has weak or no activity against chains of 4 or less ubiquitins. Involved in degradation of misfolded chaperone substrates via its interaction with STUB1/CHIP: recruited to monoubiquitinated STUB1/CHIP, and restricts the length of ubiquitin chain attached to STUB1/CHIP substrates and preventing further chain extension. Interacts with key regulators of transcription and represses transcription: acts as a histone-binding protein that regulates transcription. Acts as a negative regulator of mTORC1 signaling in response to amino acid deprivation by mediating deubiquitination of RHEB, thereby promoting RHEB inactivation by the TSC-TBC complex. Regulates autophagy via the deubiquitination of 'Lys-402' of BECN1 leading to the stabilization of BECN1. The chain is Ataxin-3 (ATXN3) from Gallus gallus (Chicken).